The primary structure comprises 455 residues: Adenylosuccinate synthetase isozyme 2 (455 aa).

The disordered stretch occupies residues 1-25 (MSDSGDAQPQDGGNSSSSRGKSPSV). Positions 12 to 25 (GGNSSSSRGKSPSV) are enriched in low complexity. GTP-binding positions include 38–44 (GDEGKGK) and 66–68 (GHT). The active-site Proton acceptor is the Asp-39. Residues Asp-39 and Gly-66 each coordinate Mg(2+). Residue Asp-39 coordinates substrate. IMP-binding positions include 39–42 (DEGK), 64–67 (NAGH), Thr-161, Arg-175, Asn-254, Thr-269, and Arg-333. The active-site Proton donor is the His-67. 329–335 (VTTGRKR) provides a ligand contact to substrate. GTP-binding positions include Arg-335, 361–363 (KLD), and 443–446 (GVGK).

This sequence belongs to the adenylosuccinate synthetase family. In terms of assembly, homodimer. It depends on Mg(2+) as a cofactor.

The protein localises to the cytoplasm. The protein resides in the mitochondrion. It catalyses the reaction IMP + L-aspartate + GTP = N(6)-(1,2-dicarboxyethyl)-AMP + GDP + phosphate + 2 H(+). It participates in purine metabolism; AMP biosynthesis via de novo pathway; AMP from IMP: step 1/2. With respect to regulation, inhibited competitively by AMP and IMP and non-competitively by fructose 1,6-bisphosphate. In terms of biological role, plays an important role in the de novo pathway and in the salvage pathway of purine nucleotide biosynthesis. Catalyzes the first committed step in the biosynthesis of AMP from IMP. The protein is Adenylosuccinate synthetase isozyme 2 (adss2) of Danio rerio (Zebrafish).